A 357-amino-acid chain; its full sequence is Tribbles homolog 3 (357 aa).

A disordered region spans residues 1-63; sequence MRASPLAVPA…PAPVHAPDVT (63 aa). The interaction with DDIT3/CHOP stretch occupies residues 1–127; the sequence is MRASPLAVPA…GHVARPAEVL (127 aa). Positions 68 to 316 constitute a Protein kinase domain; the sequence is LGPYVLLEPE…SGILLHPWLR (249 aa). Residues 333–357 are disordered; it reads DQVVPEGPGLEEAEEEGERDMGLYG. A compositionally biased stretch (acidic residues) spans 341 to 350; it reads GLEEAEEEGE.

Belongs to the protein kinase superfamily. CAMK Ser/Thr protein kinase family. Tribbles subfamily. As to quaternary structure, interacts with AKT1, AKT2, MAP2K1 and MAP2K7. Interacts with ATF4. Interacts with DDIT3/CHOP and inhibits its interaction with EP300/P300. Interacts with APOBEC3C. Interacts (via N-terminus) with APOBEC3A. Interacts with RELA.

The protein localises to the nucleus. Its function is as follows. Inactive protein kinase which acts as a regulator of the integrated stress response (ISR), a process for adaptation to various stress. Inhibits the transcriptional activity of DDIT3/CHOP and is involved in DDIT3/CHOP-dependent cell death during ER stress. May play a role in programmed neuronal cell death but does not appear to affect non-neuronal cells. Acts as a negative feedback regulator of the ATF4-dependent transcription during the ISR: while TRIB3 expression is promoted by ATF4, TRIB3 protein interacts with ATF4 and inhibits ATF4 transcription activity. Disrupts insulin signaling by binding directly to Akt kinases and blocking their activation. May bind directly to and mask the 'Thr-308' phosphorylation site in AKT1. Interacts with the NF-kappa-B transactivator p65 RELA and inhibits its phosphorylation and thus its transcriptional activation activity. Interacts with MAPK kinases and regulates activation of MAP kinases. Can inhibit APOBEC3A editing of nuclear DNA. The protein is Tribbles homolog 3 (TRIB3) of Bos taurus (Bovine).